We begin with the raw amino-acid sequence, 304 residues long: GTPase Era (304 aa).

The Era-type G domain maps to 11–179 (YCGFIAIVGR…QKIVRKSLRE (169 aa)). The tract at residues 19–26 (GRPNVGKS) is G1. 19–26 (GRPNVGKS) contacts GTP. The segment at 45–49 (QTTRH) is G2. The G3 stretch occupies residues 66 to 69 (DTPG). Residues 66–70 (DTPGL) and 128–131 (NKVD) contribute to the GTP site. The G4 stretch occupies residues 128-131 (NKVD). The tract at residues 158 to 160 (ISA) is G5. Residues 210–287 (TGEELPYSVT…HLELWVKVKA (78 aa)) enclose the KH type-2 domain.

This sequence belongs to the TRAFAC class TrmE-Era-EngA-EngB-Septin-like GTPase superfamily. Era GTPase family. Monomer.

It localises to the cytoplasm. The protein localises to the cell inner membrane. Its function is as follows. An essential GTPase that binds both GDP and GTP, with rapid nucleotide exchange. Plays a role in 16S rRNA processing and 30S ribosomal subunit biogenesis and possibly also in cell cycle regulation and energy metabolism. In Haemophilus ducreyi (strain 35000HP / ATCC 700724), this protein is GTPase Era.